A 102-amino-acid chain; its full sequence is Protein translation factor SUI1 homolog (102 aa).

It belongs to the SUI1 family.

This is Protein translation factor SUI1 homolog from Methanosarcina acetivorans (strain ATCC 35395 / DSM 2834 / JCM 12185 / C2A).